Consider the following 291-residue polypeptide: Basic helix-loop-helix protein 80 (291 aa).

Residues 65–120 (SAVLDTSPSVDRKRKAAEDSAHSKDSCKDGKSRRGKKASKEVEEKSTTEDEPPKGY) are disordered. Positions 80-117 (AAEDSAHSKDSCKDGKSRRGKKASKEVEEKSTTEDEPP) are enriched in basic and acidic residues. The short motif at 125–132 (ARRGQATD) is the Nuclear localization signal element. Residues 129-142 (QATDSHSLAERVRR) form a basic motif; degenerate region. The 51-residue stretch at 129–179 (QATDSHSLAERVRRERISERMRMLQALVPGCDKVTGKALILDEIINYVQSL) folds into the bHLH domain. The tract at residues 143 to 179 (ERISERMRMLQALVPGCDKVTGKALILDEIINYVQSL) is helix-loop-helix motif.

It belongs to the bHLH protein family. Homodimer. Interacts with IBH1, BC1 and LO9-177.

It localises to the nucleus. Its function is as follows. Together with BCL2, positive regulator of cell elongation at least partially through increased gibberellic acid (GA) biosynthesis. The polypeptide is Basic helix-loop-helix protein 80 (Oryza sativa subsp. indica (Rice)).